The chain runs to 172 residues: Protein-export protein SecB (172 aa).

It belongs to the SecB family. Homotetramer, a dimer of dimers. One homotetramer interacts with 1 SecA dimer.

The protein resides in the cytoplasm. Its function is as follows. One of the proteins required for the normal export of preproteins out of the cell cytoplasm. It is a molecular chaperone that binds to a subset of precursor proteins, maintaining them in a translocation-competent state. It also specifically binds to its receptor SecA. In Dinoroseobacter shibae (strain DSM 16493 / NCIMB 14021 / DFL 12), this protein is Protein-export protein SecB.